The primary structure comprises 261 residues: MTHQTHAYHMVNPSPWPLTGALSALLMTSGLVMWFHYHSTILVLLGLLTNILTMYQWWRDVVREGTFQGHHTPTVQKGLRYGMVLFIISEVFFFAGFFWAFYHSSLAPTPELGGCWPPTGIHPLDPMEVPLLNTSVLLASGVTITWAHHSLMEGNRKQMLQALFITISLGIYFTLLQASEYHEASFSISDGIYGSTFFMATGFHGLHVIIGSTFLAVCFLRQLKFHFTSNHHFGFEAAAWYWHFVDVVWLFLYVSIYWWGS.

The Mitochondrial matrix segment spans residues 1–15; the sequence is MTHQTHAYHMVNPSP. A helical membrane pass occupies residues 16-34; it reads WPLTGALSALLMTSGLVMW. Topologically, residues 35–40 are mitochondrial intermembrane; the sequence is FHYHST. The chain crosses the membrane as a helical span at residues 41 to 66; that stretch reads ILVLLGLLTNILTMYQWWRDVVREGT. Residues 67-72 lie on the Mitochondrial matrix side of the membrane; that stretch reads FQGHHT. Residues 73–105 form a helical membrane-spanning segment; sequence PTVQKGLRYGMVLFIISEVFFFAGFFWAFYHSS. Over 106 to 128 the chain is Mitochondrial intermembrane; sequence LAPTPELGGCWPPTGIHPLDPME. A helical membrane pass occupies residues 129 to 152; that stretch reads VPLLNTSVLLASGVTITWAHHSLM. Residues 153 to 155 are Mitochondrial matrix-facing; that stretch reads EGN. A helical transmembrane segment spans residues 156 to 183; sequence RKQMLQALFITISLGIYFTLLQASEYHE. Residues 184 to 190 are Mitochondrial intermembrane-facing; that stretch reads ASFSISD. The chain crosses the membrane as a helical span at residues 191–223; sequence GIYGSTFFMATGFHGLHVIIGSTFLAVCFLRQL. Topologically, residues 224 to 232 are mitochondrial matrix; the sequence is KFHFTSNHH. A helical membrane pass occupies residues 233-256; sequence FGFEAAAWYWHFVDVVWLFLYVSI. Over 257 to 261 the chain is Mitochondrial intermembrane; that stretch reads YWWGS.

This sequence belongs to the cytochrome c oxidase subunit 3 family. Component of the cytochrome c oxidase (complex IV, CIV), a multisubunit enzyme composed of 14 subunits. The complex is composed of a catalytic core of 3 subunits MT-CO1, MT-CO2 and MT-CO3, encoded in the mitochondrial DNA, and 11 supernumerary subunits COX4I, COX5A, COX5B, COX6A, COX6B, COX6C, COX7A, COX7B, COX7C, COX8 and NDUFA4, which are encoded in the nuclear genome. The complex exists as a monomer or a dimer and forms supercomplexes (SCs) in the inner mitochondrial membrane with NADH-ubiquinone oxidoreductase (complex I, CI) and ubiquinol-cytochrome c oxidoreductase (cytochrome b-c1 complex, complex III, CIII), resulting in different assemblies (supercomplex SCI(1)III(2)IV(1) and megacomplex MCI(2)III(2)IV(2)).

It is found in the mitochondrion inner membrane. The catalysed reaction is 4 Fe(II)-[cytochrome c] + O2 + 8 H(+)(in) = 4 Fe(III)-[cytochrome c] + 2 H2O + 4 H(+)(out). Its function is as follows. Component of the cytochrome c oxidase, the last enzyme in the mitochondrial electron transport chain which drives oxidative phosphorylation. The respiratory chain contains 3 multisubunit complexes succinate dehydrogenase (complex II, CII), ubiquinol-cytochrome c oxidoreductase (cytochrome b-c1 complex, complex III, CIII) and cytochrome c oxidase (complex IV, CIV), that cooperate to transfer electrons derived from NADH and succinate to molecular oxygen, creating an electrochemical gradient over the inner membrane that drives transmembrane transport and the ATP synthase. Cytochrome c oxidase is the component of the respiratory chain that catalyzes the reduction of oxygen to water. Electrons originating from reduced cytochrome c in the intermembrane space (IMS) are transferred via the dinuclear copper A center (CU(A)) of subunit 2 and heme A of subunit 1 to the active site in subunit 1, a binuclear center (BNC) formed by heme A3 and copper B (CU(B)). The BNC reduces molecular oxygen to 2 water molecules using 4 electrons from cytochrome c in the IMS and 4 protons from the mitochondrial matrix. The chain is Cytochrome c oxidase subunit 3 (MT-CO3) from Dugong dugon (Dugong).